Consider the following 102-residue polypeptide: Urease subunit beta (102 aa).

Belongs to the urease beta subunit family. Heterotrimer of UreA (gamma), UreB (beta) and UreC (alpha) subunits. Three heterotrimers associate to form the active enzyme.

The protein localises to the cytoplasm. The catalysed reaction is urea + 2 H2O + H(+) = hydrogencarbonate + 2 NH4(+). It functions in the pathway nitrogen metabolism; urea degradation; CO(2) and NH(3) from urea (urease route): step 1/1. The chain is Urease subunit beta from Acinetobacter baumannii (strain ACICU).